Consider the following 193-residue polypeptide: Putative 3-methyladenine DNA glycosylase (193 aa).

Belongs to the DNA glycosylase MPG family.

The chain is Putative 3-methyladenine DNA glycosylase from Agrobacterium fabrum (strain C58 / ATCC 33970) (Agrobacterium tumefaciens (strain C58)).